The following is a 515-amino-acid chain: Anterior pharynx in excess protein 1 (515 aa).

The first 26 residues, 1 to 26 (MTNFSSLLTTIFLCIISSATGSGTIE), serve as a signal peptide directing secretion. At 27–392 (LLISSPQTVL…QASDELQLRL (366 aa)) the chain is on the extracellular side. Asparagine 123 carries N-linked (GlcNAc...) asparagine glycosylation. The DSL domain occupies 130-172 (NLCSSNYHGKRCNRYCIANAKLHWECSTHGVRRCSAGWSGEDC). 14 disulfides stabilise this stretch: cysteine 132–cysteine 141, cysteine 145–cysteine 155, cysteine 163–cysteine 172, cysteine 177–cysteine 187, cysteine 181–cysteine 193, cysteine 195–cysteine 204, cysteine 213–cysteine 218, cysteine 228–cysteine 237, cysteine 244–cysteine 256, cysteine 250–cysteine 268, cysteine 270–cysteine 279, cysteine 288–cysteine 300, cysteine 294–cysteine 310, and cysteine 312–cysteine 321. EGF-like domains follow at residues 173 to 205 (SNPI…TRCE), 203 to 238 (RCEQ…DRCD), 240 to 280 (DIKI…SQCK), and 284 to 322 (SKVR…KFCE). The N-linked (GlcNAc...) asparagine glycan is linked to asparagine 200. Residues 325 to 349 (NHGDCSAMRCSAGETCQISGDFAIC) enclose the EGF-like 5; incomplete domain. A helical membrane pass occupies residues 393 to 413 (IAAICVLFSVCVIGLALVSFF). The Cytoplasmic portion of the chain corresponds to 414–515 (FYMHSFSKWK…AADDESSFRV (102 aa)). Disordered regions lie at residues 427 to 452 (SQQA…SGTG) and 466 to 494 (RGNA…PPAY). Low complexity predominate over residues 431–452 (GGSTILPTTTSIPMSTTSSGTG).

The protein resides in the cell membrane. It localises to the nucleus. Its subcellular location is the cytoplasm. Its function is as follows. Probable ligand for lin-12/Notch and glp-1/Notch receptors and involved in the mediation of Notch signaling. Involved in the lin-12/Notch pathway signaling of cell fate in vulval precursor cells (VPCs), acting redundantly with dsl-1 and lag-2. Contributes to the establishment of the dorsal-ventral axis in early embryos. Involved in the specification of the blastomere cell ABp fate, probably acting as a signal from the P2 blastomere to the glp-1/Notch receptor on ABp and ABa. Probably acts as a signal, from the secondary vulval epithelial cells and the vulval muscle type 1 (vm1) cells, to activate the lin-12/Notch pathway in type 2 vulval muscle (vm2) cells, contributing to formation of the postsynaptic muscle plasma membrane extensions, known as muscle arms. Required for oocyte growth control, acting redundantly with lag-2, perhaps signaling via the glp-1/Notch pathway. Plays a somatic role in ovulation during adulthood, perhaps via lin-12/Notch signaling. Involved in establishing left-right asymmetry during intestinal organogenesis. The protein is Anterior pharynx in excess protein 1 (apx-1) of Caenorhabditis elegans.